Reading from the N-terminus, the 820-residue chain is Leucine--tRNA ligase (820 aa).

The 'HIGH' region signature appears at 40–51; it reads PYPSGAGLHVGH. The 'KMSKS' region signature appears at 601–605; it reads KMSKS. Lys604 lines the ATP pocket.

The protein belongs to the class-I aminoacyl-tRNA synthetase family.

Its subcellular location is the cytoplasm. The enzyme catalyses tRNA(Leu) + L-leucine + ATP = L-leucyl-tRNA(Leu) + AMP + diphosphate. This chain is Leucine--tRNA ligase, found in Chlamydia caviae (strain ATCC VR-813 / DSM 19441 / 03DC25 / GPIC) (Chlamydophila caviae).